The primary structure comprises 601 residues: 4-hydroxy-3-methylbut-2-en-1-yl diphosphate synthase (flavodoxin) (601 aa).

Positions 507, 510, 542, and 549 each coordinate [4Fe-4S] cluster.

Belongs to the IspG family. [4Fe-4S] cluster is required as a cofactor.

It carries out the reaction (2E)-4-hydroxy-3-methylbut-2-enyl diphosphate + oxidized [flavodoxin] + H2O + 2 H(+) = 2-C-methyl-D-erythritol 2,4-cyclic diphosphate + reduced [flavodoxin]. It functions in the pathway isoprenoid biosynthesis; isopentenyl diphosphate biosynthesis via DXP pathway; isopentenyl diphosphate from 1-deoxy-D-xylulose 5-phosphate: step 5/6. Its function is as follows. Converts 2C-methyl-D-erythritol 2,4-cyclodiphosphate (ME-2,4cPP) into 1-hydroxy-2-methyl-2-(E)-butenyl 4-diphosphate. This Chlamydia muridarum (strain MoPn / Nigg) protein is 4-hydroxy-3-methylbut-2-en-1-yl diphosphate synthase (flavodoxin).